We begin with the raw amino-acid sequence, 210 residues long: Small heat shock protein hspG6 (210 aa).

The 177-residue stretch at 34–210 (KTIIDKLPPM…YSNTIKININ (177 aa)) folds into the sHSP domain. Positions 93 to 151 (VIEKSTSSSTLDSKEDEPSIEEFEDDIKPKSKSDNTTVSTTTTATTKENKEDENKTKST) are disordered. The segment covering 126 to 138 (DNTTVSTTTTATT) has biased composition (low complexity). The segment covering 139 to 151 (KENKEDENKTKST) has biased composition (basic and acidic residues).

The protein belongs to the small heat shock protein (HSP20) family.

The sequence is that of Small heat shock protein hspG6 (hspG6) from Dictyostelium discoideum (Social amoeba).